A 138-amino-acid polypeptide reads, in one-letter code: 6,7-dimethyl-8-ribityllumazine synthase (138 aa).

5-amino-6-(D-ribitylamino)uracil contacts are provided by residues F13, 45-47 (VFD), and 69-71 (AVI). A (2S)-2-hydroxy-3-oxobutyl phosphate-binding site is contributed by 74–75 (AT). H77 acts as the Proton donor in catalysis. Position 102 (L102) interacts with 5-amino-6-(D-ribitylamino)uracil. (2S)-2-hydroxy-3-oxobutyl phosphate is bound at residue R117.

It belongs to the DMRL synthase family.

The enzyme catalyses (2S)-2-hydroxy-3-oxobutyl phosphate + 5-amino-6-(D-ribitylamino)uracil = 6,7-dimethyl-8-(1-D-ribityl)lumazine + phosphate + 2 H2O + H(+). The protein operates within cofactor biosynthesis; riboflavin biosynthesis; riboflavin from 2-hydroxy-3-oxobutyl phosphate and 5-amino-6-(D-ribitylamino)uracil: step 1/2. Catalyzes the formation of 6,7-dimethyl-8-ribityllumazine by condensation of 5-amino-6-(D-ribitylamino)uracil with 3,4-dihydroxy-2-butanone 4-phosphate. This is the penultimate step in the biosynthesis of riboflavin. The polypeptide is 6,7-dimethyl-8-ribityllumazine synthase (Methanobrevibacter smithii (strain ATCC 35061 / DSM 861 / OCM 144 / PS)).